Here is a 253-residue protein sequence, read N- to C-terminus: 2-succinyl-6-hydroxy-2,4-cyclohexadiene-1-carboxylate synthase (253 aa).

Positions 11–147 constitute an AB hydrolase-1 domain; it reads PWLVCLHGLF…PEALQDWYQQ (137 aa).

The protein belongs to the AB hydrolase superfamily. MenH family. Monomer.

It catalyses the reaction 5-enolpyruvoyl-6-hydroxy-2-succinyl-cyclohex-3-ene-1-carboxylate = (1R,6R)-6-hydroxy-2-succinyl-cyclohexa-2,4-diene-1-carboxylate + pyruvate. Its pathway is quinol/quinone metabolism; 1,4-dihydroxy-2-naphthoate biosynthesis; 1,4-dihydroxy-2-naphthoate from chorismate: step 3/7. It participates in quinol/quinone metabolism; menaquinone biosynthesis. Catalyzes a proton abstraction reaction that results in 2,5-elimination of pyruvate from 2-succinyl-5-enolpyruvyl-6-hydroxy-3-cyclohexene-1-carboxylate (SEPHCHC) and the formation of 2-succinyl-6-hydroxy-2,4-cyclohexadiene-1-carboxylate (SHCHC). The sequence is that of 2-succinyl-6-hydroxy-2,4-cyclohexadiene-1-carboxylate synthase from Pectobacterium atrosepticum (strain SCRI 1043 / ATCC BAA-672) (Erwinia carotovora subsp. atroseptica).